A 410-amino-acid chain; its full sequence is Cysteine desulfurase IscS (410 aa).

Residues Ala80 to Thr81, Asn160, Gln188, and Ser208 to His210 contribute to the pyridoxal 5'-phosphate site. Lys211 is modified (N6-(pyridoxal phosphate)lysine). Thr248 is a pyridoxal 5'-phosphate binding site. Catalysis depends on Cys334, which acts as the Cysteine persulfide intermediate. A [2Fe-2S] cluster-binding site is contributed by Cys334.

It belongs to the class-V pyridoxal-phosphate-dependent aminotransferase family. NifS/IscS subfamily. Homodimer. Forms a heterotetramer with IscU, interacts with other sulfur acceptors. It depends on pyridoxal 5'-phosphate as a cofactor.

The protein resides in the cytoplasm. It catalyses the reaction (sulfur carrier)-H + L-cysteine = (sulfur carrier)-SH + L-alanine. The protein operates within cofactor biosynthesis; iron-sulfur cluster biosynthesis. In terms of biological role, master enzyme that delivers sulfur to a number of partners involved in Fe-S cluster assembly, tRNA modification or cofactor biosynthesis. Catalyzes the removal of elemental sulfur atoms from cysteine to produce alanine. Functions as a sulfur delivery protein for Fe-S cluster synthesis onto IscU, an Fe-S scaffold assembly protein, as well as other S acceptor proteins. The polypeptide is Cysteine desulfurase IscS (Rickettsia conorii (strain ATCC VR-613 / Malish 7)).